A 204-amino-acid polypeptide reads, in one-letter code: phospholipase A2 inhibitor and Ly6/PLAUR domain-containing protein (204 aa).

Residues 1–26 (MRLSRRPETFLLAFVLLCTLLGLGCP) form the signal peptide. The region spanning 27-117 (LHCEICTAAG…NSAFLSVPLT (91 aa)) is the UPAR/Ly6 domain. Intrachain disulfides connect cysteine 29/cysteine 53, cysteine 32/cysteine 39, cysteine 46/cysteine 74, cysteine 80/cysteine 101, cysteine 102/cysteine 107, cysteine 126/cysteine 151, and cysteine 144/cysteine 172.

Belongs to the CNF-like-inhibitor family.

The protein resides in the secreted. The chain is phospholipase A2 inhibitor and Ly6/PLAUR domain-containing protein (PINLYP) from Homo sapiens (Human).